Consider the following 258-residue polypeptide: Rho-related GTP-binding protein RhoU (258 aa).

Residues 1 to 45 (MPPQQGDPAFPDRCEAPPVPPRRERGGRGGRGPGEPGGRGRAGGA) are disordered. Positions 10 to 27 (FPDRCEAPPVPPRRERGG) are enriched in basic and acidic residues. A compositionally biased stretch (gly residues) spans 29-45 (GGRGPGEPGGRGRAGGA). GTP is bound by residues 56-63 (GDGAVGKT), 103-107 (DTAGQ), and 161-164 (TQSD). Glycyl lysine isopeptide (Lys-Gly) (interchain with G-Cter in ubiquitin) cross-links involve residues K177 and K248. The S-palmitoyl cysteine moiety is linked to residue C256.

It belongs to the small GTPase superfamily. Rho family. As to quaternary structure, interacts with PAK1. Interacts with PAK3. Interacts with ARHGAP30 in a GTP-independent manner. In its GTP-loaded conformation, interacts with ARHGAP31. Interacts with PTK2B/PYK2. Interacts with PAK4; the interaction is PAK4 kinase activity-independent and protects RHOU from ubiquitination. The cofactor is Mg(2+). In terms of processing, ubiquitinated. 'Lys-48'-linked ubiquitination at Lys-177 and Lys-248 by the ECS(RAB40A) complex leading to its degradation. Post-translationally, tyrosine phosphorylated by SRC in response to PTK2B/PYK2 activation. In terms of tissue distribution, ubiquitously expressed in all tissues examined. Expressed at high levels in the stomach, small intestine, brain, skeletal muscle and placenta.

It is found in the cell membrane. It localises to the golgi apparatus membrane. The protein resides in the cell junction. The protein localises to the focal adhesion. Its subcellular location is the cell projection. It is found in the podosome. In terms of biological role, binds to and activates protein kinase PAK1. Plays a role in the regulation of cell morphology, cytoskeletal organization and focal adhesion assembly during cell migration. Also stimulates quiescent cells to reenter the cell cycle. Has no detectable GTPase activity but its high intrinsic guanine nucleotide exchange activity suggests it is constitutively GTP-bound. The polypeptide is Rho-related GTP-binding protein RhoU (Homo sapiens (Human)).